Reading from the N-terminus, the 957-residue chain is Glycine dehydrogenase (decarboxylating) (957 aa).

The residue at position 708 (Lys-708) is an N6-(pyridoxal phosphate)lysine.

Belongs to the GcvP family. The glycine cleavage system is composed of four proteins: P, T, L and H. It depends on pyridoxal 5'-phosphate as a cofactor.

The catalysed reaction is N(6)-[(R)-lipoyl]-L-lysyl-[glycine-cleavage complex H protein] + glycine + H(+) = N(6)-[(R)-S(8)-aminomethyldihydrolipoyl]-L-lysyl-[glycine-cleavage complex H protein] + CO2. Functionally, the glycine cleavage system catalyzes the degradation of glycine. The P protein binds the alpha-amino group of glycine through its pyridoxal phosphate cofactor; CO(2) is released and the remaining methylamine moiety is then transferred to the lipoamide cofactor of the H protein. The sequence is that of Glycine dehydrogenase (decarboxylating) from Escherichia fergusonii (strain ATCC 35469 / DSM 13698 / CCUG 18766 / IAM 14443 / JCM 21226 / LMG 7866 / NBRC 102419 / NCTC 12128 / CDC 0568-73).